A 269-amino-acid polypeptide reads, in one-letter code: Orotidine 5'-phosphate decarboxylase (269 aa).

Residue Lys92 is the Proton donor of the active site.

This sequence belongs to the OMP decarboxylase family. Type 2 subfamily.

The enzyme catalyses orotidine 5'-phosphate + H(+) = UMP + CO2. It functions in the pathway pyrimidine metabolism; UMP biosynthesis via de novo pathway; UMP from orotate: step 2/2. In Natronomonas pharaonis (strain ATCC 35678 / DSM 2160 / CIP 103997 / JCM 8858 / NBRC 14720 / NCIMB 2260 / Gabara) (Halobacterium pharaonis), this protein is Orotidine 5'-phosphate decarboxylase.